We begin with the raw amino-acid sequence, 119 residues long: MGLYFFPKEERLKKQEDFLRILREGKPYSLSKNFVVYIRKGAEKRRIGISVNKKVGKAVVRNKIKRLIREVYRLHRPYLKEDIEMLVIVKPGENIKNLDFHKVKEMLIKIWEKAGILKK.

This sequence belongs to the RnpA family. Consists of a catalytic RNA component (M1 or rnpB) and a protein subunit.

It catalyses the reaction Endonucleolytic cleavage of RNA, removing 5'-extranucleotides from tRNA precursor.. In terms of biological role, RNaseP catalyzes the removal of the 5'-leader sequence from pre-tRNA to produce the mature 5'-terminus. It can also cleave other RNA substrates such as 4.5S RNA. The protein component plays an auxiliary but essential role in vivo by binding to the 5'-leader sequence and broadening the substrate specificity of the ribozyme. This Dictyoglomus turgidum (strain DSM 6724 / Z-1310) protein is Ribonuclease P protein component.